Here is a 481-residue protein sequence, read N- to C-terminus: Glutamyl-tRNA(Gln) amidotransferase subunit A (481 aa).

Residues Lys-76 and Ser-151 each act as charge relay system in the active site. Ser-175 (acyl-ester intermediate) is an active-site residue.

Belongs to the amidase family. GatA subfamily. In terms of assembly, heterotrimer of A, B and C subunits.

It catalyses the reaction L-glutamyl-tRNA(Gln) + L-glutamine + ATP + H2O = L-glutaminyl-tRNA(Gln) + L-glutamate + ADP + phosphate + H(+). In terms of biological role, allows the formation of correctly charged Gln-tRNA(Gln) through the transamidation of misacylated Glu-tRNA(Gln) in organisms which lack glutaminyl-tRNA synthetase. The reaction takes place in the presence of glutamine and ATP through an activated gamma-phospho-Glu-tRNA(Gln). The sequence is that of Glutamyl-tRNA(Gln) amidotransferase subunit A from Neisseria meningitidis serogroup B (strain ATCC BAA-335 / MC58).